The sequence spans 186 residues: Potassium-transporting ATPase KdpC subunit 1 (186 aa).

The helical transmembrane segment at 10 to 30 (LTIITMVLCGFLFPLAITLIG) threads the bilayer.

Belongs to the KdpC family. In terms of assembly, the system is composed of three essential subunits: KdpA, KdpB and KdpC.

The protein resides in the cell membrane. In terms of biological role, part of the high-affinity ATP-driven potassium transport (or Kdp) system, which catalyzes the hydrolysis of ATP coupled with the electrogenic transport of potassium into the cytoplasm. This subunit acts as a catalytic chaperone that increases the ATP-binding affinity of the ATP-hydrolyzing subunit KdpB by the formation of a transient KdpB/KdpC/ATP ternary complex. This Staphylococcus aureus (strain Mu50 / ATCC 700699) protein is Potassium-transporting ATPase KdpC subunit 1.